We begin with the raw amino-acid sequence, 802 residues long: Lon protease (802 aa).

The Lon N-terminal domain occupies 17 to 209 (LPILPLNNVV…QVLSFLERER (193 aa)). Position 363 to 370 (363 to 370 (GPPGVGKT)) interacts with ATP. Positions 599–780 (EDEVGVVTGL…DEVLPRVLHP (182 aa)) constitute a Lon proteolytic domain. Active-site residues include Ser-686 and Lys-729.

It belongs to the peptidase S16 family. In terms of assembly, homohexamer. Organized in a ring with a central cavity.

Its subcellular location is the cytoplasm. It catalyses the reaction Hydrolysis of proteins in presence of ATP.. ATP-dependent serine protease that mediates the selective degradation of mutant and abnormal proteins as well as certain short-lived regulatory proteins. Required for cellular homeostasis and for survival from DNA damage and developmental changes induced by stress. Degrades polypeptides processively to yield small peptide fragments that are 5 to 10 amino acids long. Binds to DNA in a double-stranded, site-specific manner. This is Lon protease from Roseiflexus castenholzii (strain DSM 13941 / HLO8).